We begin with the raw amino-acid sequence, 1108 residues long: Probable arabinosyltransferase A (1108 aa).

The next 13 membrane-spanning stretches (helical) occupy residues 12–34 (IPRS…VPLL), 204–223 (IVMV…LAVL), 258–280 (VGLA…HVVG), 334–356 (VWMR…HWVL), 368–387 (ANRV…WLPF), 397–414 (IALG…AIAL), 421–443 (AVAV…AVAA), 463–482 (GLLA…LVVV), 531–553 (FAVL…RGHV), 582–604 (WAVQ…AFAC), 616–638 (TLYV…GWFY), 653–675 (IASH…LAAW), and 696–718 (VLAS…ASLT). Residues 804–825 (PGLVNSDASPNKPNVAYSDSAG) form a disordered region.

It belongs to the emb family.

It is found in the cell membrane. Its function is as follows. Arabinosyl transferase responsible for the polymerization of arabinose into the arabinan of arabinogalactan. The sequence is that of Probable arabinosyltransferase A (embA) from Mycobacterium avium.